An 84-amino-acid chain; its full sequence is Large ribosomal subunit protein bL28 (84 aa).

The protein belongs to the bacterial ribosomal protein bL28 family.

In Deinococcus geothermalis (strain DSM 11300 / CIP 105573 / AG-3a), this protein is Large ribosomal subunit protein bL28.